A 310-amino-acid polypeptide reads, in one-letter code: Ribosomal RNA small subunit methyltransferase H (310 aa).

S-adenosyl-L-methionine-binding positions include 32-34 (GGH), Asp-52, Phe-79, Asp-100, and Gln-107.

It belongs to the methyltransferase superfamily. RsmH family.

It is found in the cytoplasm. The enzyme catalyses cytidine(1402) in 16S rRNA + S-adenosyl-L-methionine = N(4)-methylcytidine(1402) in 16S rRNA + S-adenosyl-L-homocysteine + H(+). Specifically methylates the N4 position of cytidine in position 1402 (C1402) of 16S rRNA. The polypeptide is Ribosomal RNA small subunit methyltransferase H (Bacillus cereus (strain B4264)).